Consider the following 25-residue polypeptide: Caerin-1.6 (25 aa).

A Leucine amide modification is found at Leu-25.

It belongs to the frog skin active peptide (FSAP) family. Caerin subfamily. As to expression, expressed by the skin dorsal glands.

It localises to the secreted. Its function is as follows. Antimicrobial peptide. Adopts an alpha helical conformation which can disrupt bacterial membranes. Strongly inhibits the formation of NO by neuronal nitric oxide synthase (nNOS) at micromolar concentrations. Acts by a non-competitive mechanism, probably by binding to calcium/calmodulin and as a consequence blocking calmodulin attachment to nNOS. In terms of biological role, does not show antimicrobial activity. The chain is Caerin-1.6 from Ranoidea chloris (Red-eyed tree frog).